A 194-amino-acid chain; its full sequence is Holliday junction branch migration complex subunit RuvA (194 aa).

Residues 1-64 (MISSLNGILE…EDALSLFGFA (64 aa)) form a domain I region. Residues 65–143 (TTEELSLFET…KNWEAGVLSQ (79 aa)) are domain II. A flexible linker region spans residues 144–149 (VTEANS). Positions 149–194 (SDILATLTALGYSSSEAAKAISSLGDNGDLPLEERIKLALNYFNNK) are domain III.

The protein belongs to the RuvA family. Homotetramer. Forms an RuvA(8)-RuvB(12)-Holliday junction (HJ) complex. HJ DNA is sandwiched between 2 RuvA tetramers; dsDNA enters through RuvA and exits via RuvB. An RuvB hexamer assembles on each DNA strand where it exits the tetramer. Each RuvB hexamer is contacted by two RuvA subunits (via domain III) on 2 adjacent RuvB subunits; this complex drives branch migration. In the full resolvosome a probable DNA-RuvA(4)-RuvB(12)-RuvC(2) complex forms which resolves the HJ.

Its subcellular location is the cytoplasm. The RuvA-RuvB-RuvC complex processes Holliday junction (HJ) DNA during genetic recombination and DNA repair, while the RuvA-RuvB complex plays an important role in the rescue of blocked DNA replication forks via replication fork reversal (RFR). RuvA specifically binds to HJ cruciform DNA, conferring on it an open structure. The RuvB hexamer acts as an ATP-dependent pump, pulling dsDNA into and through the RuvAB complex. HJ branch migration allows RuvC to scan DNA until it finds its consensus sequence, where it cleaves and resolves the cruciform DNA. The protein is Holliday junction branch migration complex subunit RuvA of Dehalococcoides mccartyi (strain CBDB1).